An 876-amino-acid polypeptide reads, in one-letter code: Alanine--tRNA ligase (876 aa).

Residue lysine 74 is modified to N6-acetyllysine. Residues histidine 564, histidine 568, cysteine 666, and histidine 670 each coordinate Zn(2+).

This sequence belongs to the class-II aminoacyl-tRNA synthetase family. Homotetramer. Zn(2+) serves as cofactor.

The protein resides in the cytoplasm. The catalysed reaction is tRNA(Ala) + L-alanine + ATP = L-alanyl-tRNA(Ala) + AMP + diphosphate. Its function is as follows. Catalyzes the attachment of alanine to tRNA(Ala) in a two-step reaction: alanine is first activated by ATP to form Ala-AMP and then transferred to the acceptor end of tRNA(Ala). Also edits incorrectly charged Ser-tRNA(Ala) and Gly-tRNA(Ala) via its editing domain. The chain is Alanine--tRNA ligase from Escherichia coli O9:H4 (strain HS).